A 184-amino-acid chain; its full sequence is MDKEKIEQAVSMIIEAIGEDPNREGLLETPQRVARMYEEIFSGLNQDAKTHLSKSFEIVDDNMVIEKDIPFYSMCEHHLLPFWGKVNIAYIPNKRVAGLSKLARTVDVYSKKPQLQERLNIEIADALMEYLNCKGCLVTIEAEHMCMNMRGVKKPGTSTMTSVARGAFEEDLDLKNEAYRLMGL.

The Zn(2+) site is built by cysteine 75, histidine 78, and cysteine 146.

Belongs to the GTP cyclohydrolase I family. In terms of assembly, homomer.

It catalyses the reaction GTP + H2O = 7,8-dihydroneopterin 3'-triphosphate + formate + H(+). It participates in cofactor biosynthesis; 7,8-dihydroneopterin triphosphate biosynthesis; 7,8-dihydroneopterin triphosphate from GTP: step 1/1. This Finegoldia magna (strain ATCC 29328 / DSM 20472 / WAL 2508) (Peptostreptococcus magnus) protein is GTP cyclohydrolase 1.